The following is a 247-amino-acid chain: Probable transcriptional regulatory protein GM21_0933 (247 aa).

The protein belongs to the TACO1 family.

The protein localises to the cytoplasm. The sequence is that of Probable transcriptional regulatory protein GM21_0933 from Geobacter sp. (strain M21).